Consider the following 43-residue polypeptide: Protein PsbN (43 aa).

The helical transmembrane segment at 5 to 27 threads the bilayer; that stretch reads TLVAIFISCLLVSFTGYAPYTAS.

Belongs to the PsbN family.

The protein localises to the plastid. It localises to the chloroplast thylakoid membrane. Its function is as follows. May play a role in photosystem I and II biogenesis. The sequence is that of Protein PsbN from Anthoceros angustus (Hornwort).